The chain runs to 87 residues: Mu-conotoxin cal12b (87 aa).

The signal sequence occupies residues 1–19 (MKLTCVLVVLLLLLPYGDL). Positions 20–42 (ITNNYIRGAARKVTPWRRNLKTR) are excised as a propeptide. 4 disulfides stabilise this stretch: cysteine 45-cysteine 58, cysteine 53-cysteine 70, cysteine 60-cysteine 75, and cysteine 69-cysteine 81. Tryptophan 59 is subject to 6'-bromotryptophan. Proline 65 carries the post-translational modification 4-hydroxyproline. Tryptophan 79 and tryptophan 80 each carry 6'-bromotryptophan. Proline 82 is modified (4-hydroxyproline). At tryptophan 86 the chain carries 6'-bromotryptophan.

In terms of tissue distribution, expressed by the venom duct.

It localises to the secreted. Its function is as follows. Mu-conotoxins block voltage-gated sodium channels. This toxin reversibly blocks voltage-gated sodium channel in cephalopods (tested on squid giant-fiber-lobe neurons) with an inhibitor constant (Ki) of 15 nmol/l, with no alteration in the voltage dependence of sodium conductance or on the kinetics of inactivation. Has no effect on sodium channels of the two gastropod S.luhuanus and A.californica (which are not natural prey). The sequence is that of Mu-conotoxin cal12b from Californiconus californicus (California cone).